Reading from the N-terminus, the 90-residue chain is Co-chaperonin GroES (90 aa).

The protein belongs to the GroES chaperonin family. As to quaternary structure, heptamer of 7 subunits arranged in a ring. Interacts with the chaperonin GroEL.

The protein resides in the cytoplasm. Together with the chaperonin GroEL, plays an essential role in assisting protein folding. The GroEL-GroES system forms a nano-cage that allows encapsulation of the non-native substrate proteins and provides a physical environment optimized to promote and accelerate protein folding. GroES binds to the apical surface of the GroEL ring, thereby capping the opening of the GroEL channel. The polypeptide is Co-chaperonin GroES (Thermosipho africanus (strain TCF52B)).